We begin with the raw amino-acid sequence, 381 residues long: uncharacterized protein (381 aa).

2 disordered regions span residues 1-20 and 36-381; these read MPYYTRDDNDVDDFDEFDPT and IPPS…EDDE. Residues 9 to 18 show a composition bias toward acidic residues; sequence NDVDDFDEFD. Composition is skewed to basic and acidic residues over residues 166–175 and 186–237; these read TEVEYGRRPE and SESE…EGYR. A phosphoserine mark is found at serine 339, serine 346, and serine 357. The span at 364-374 shows a compositional bias: basic residues; it reads KKHRHKHHHQK.

This is an uncharacterized protein from Arabidopsis thaliana (Mouse-ear cress).